Consider the following 283-residue polypeptide: MAEMAVTAALRPCSGVSPAVSGTSHRRRRPAAWRALAPPPPHAGLRLSSPAVRVPRAASSAAVEDGSSSNTDTVPTPKVIIDQDSDPDATIVEITLGDRLGDLLDTMNALKNLGLNVVKASVCLDSTGKHIKLAITKLSTGRKIGEPELLEAVRLTIINNMIQYHPEASSQLALGATFGPEPPTELVDVDIATHIDIYDDGPDRSLLVVETADRPGLLVDLVKIIDDINITVQSGEFDTEGLLAKAKFHVSYRGKPLIKALQQVLANSLRYFLRRPTTEEGSY.

A chloroplast-targeting transit peptide spans 1-56 (MAEMAVTAALRPCSGVSPAVSGTSHRRRRPAAWRALAPPPPHAGLRLSSPAVRVPR). The segment at 14 to 78 (SGVSPAVSGT…SNTDTVPTPK (65 aa)) is disordered. Low complexity predominate over residues 48–63 (SSPAVRVPRAASSAAV). ACT domains follow at residues 91-171 (IVEI…ASSQ) and 206-276 (LLVV…LRRP).

Its subcellular location is the plastid. The protein resides in the chloroplast. This is ACT domain-containing protein DS12, chloroplastic from Oryza sativa subsp. indica (Rice).